The chain runs to 76 residues: RNA-binding protein KhpA (76 aa).

Positions 29-76 (SLTYKLSVSKEDMGRVIGKQGRIAKAIRTLVYAVGSKNDKKIRLEIIE) constitute a KH domain.

The protein belongs to the KhpA RNA-binding protein family. In terms of assembly, forms a complex with KhpB.

It localises to the cytoplasm. In terms of biological role, a probable RNA chaperone. Forms a complex with KhpB which binds to cellular RNA and controls its expression. Plays a role in peptidoglycan (PG) homeostasis and cell length regulation. This is RNA-binding protein KhpA from Listeria innocua serovar 6a (strain ATCC BAA-680 / CLIP 11262).